We begin with the raw amino-acid sequence, 233 residues long: Small ribosomal subunit protein uS2 (233 aa).

It belongs to the universal ribosomal protein uS2 family.

The chain is Small ribosomal subunit protein uS2 from Clostridium botulinum (strain Alaska E43 / Type E3).